We begin with the raw amino-acid sequence, 415 residues long: Gamma-glutamyl phosphate reductase (415 aa).

This sequence belongs to the gamma-glutamyl phosphate reductase family.

It is found in the cytoplasm. The catalysed reaction is L-glutamate 5-semialdehyde + phosphate + NADP(+) = L-glutamyl 5-phosphate + NADPH + H(+). It functions in the pathway amino-acid biosynthesis; L-proline biosynthesis; L-glutamate 5-semialdehyde from L-glutamate: step 2/2. Functionally, catalyzes the NADPH-dependent reduction of L-glutamate 5-phosphate into L-glutamate 5-semialdehyde and phosphate. The product spontaneously undergoes cyclization to form 1-pyrroline-5-carboxylate. The sequence is that of Gamma-glutamyl phosphate reductase from Listeria welshimeri serovar 6b (strain ATCC 35897 / DSM 20650 / CCUG 15529 / CIP 8149 / NCTC 11857 / SLCC 5334 / V8).